Here is a 409-residue protein sequence, read N- to C-terminus: Magnesium-protoporphyrin IX monomethyl ester [oxidative] cyclase, chloroplastic (409 aa).

Disordered regions lie at residues 1–23 (MAAE…SNPS) and 36–60 (RMSA…TKKE). The N-terminal 36 residues, 1–36 (MAAEMALVKPISKFSSPKLSNPSKFLSGRRFSTVIR), are a transit peptide targeting the chloroplast. The segment covering 13 to 23 (KFSSPKLSNPS) has biased composition (polar residues).

It belongs to the AcsF family. In terms of assembly, part of the FLU-containing chloroplast membrane complex composed of FLU, CRD1, PORB, PORC, CHLP and HEMA1. Interacts with YCF54 in chloroplasts. Requires Fe cation as cofactor.

It localises to the plastid. The protein resides in the chloroplast inner membrane. The protein localises to the chloroplast thylakoid membrane. The enzyme catalyses Mg-protoporphyrin IX 13-monomethyl ester + 3 NADPH + 3 O2 + 2 H(+) = 3,8-divinyl protochlorophyllide a + 3 NADP(+) + 5 H2O. The protein operates within porphyrin-containing compound metabolism; chlorophyll biosynthesis. Its function is as follows. Catalytic component of the MgProto monomethylester (MgProtoME) cyclase complex that catalyzes the formation of the isocyclic ring in chlorophyll biosynthesis. Mediates the cyclase reaction, which results in the formation of divinylprotochlorophyllide (Pchlide) characteristic of all chlorophylls from magnesium-protoporphyrin IX 13-monomethyl ester (MgPMME). The polypeptide is Magnesium-protoporphyrin IX monomethyl ester [oxidative] cyclase, chloroplastic (Arabidopsis thaliana (Mouse-ear cress)).